The primary structure comprises 249 residues: Phosphomannomutase 2 (249 aa).

The active-site Nucleophile is D12. 2 residues coordinate Mg(2+): D12 and D14. The Proton donor/acceptor role is filled by D14. Positions 21, 123, 134, 141, 179, and 181 each coordinate alpha-D-mannose 1-phosphate. D209 contacts Mg(2+).

It belongs to the eukaryotic PMM family. As to quaternary structure, homodimer.

The protein resides in the cytoplasm. It catalyses the reaction alpha-D-mannose 1-phosphate = D-mannose 6-phosphate. It functions in the pathway nucleotide-sugar biosynthesis; GDP-alpha-D-mannose biosynthesis; alpha-D-mannose 1-phosphate from D-fructose 6-phosphate: step 2/2. In terms of biological role, involved in the synthesis of the GDP-mannose and dolichol-phosphate-mannose required for a number of critical mannosyl transfer reactions. The sequence is that of Phosphomannomutase 2 (pmmB) from Dictyostelium discoideum (Social amoeba).